Consider the following 188-residue polypeptide: Trafficking protein particle complex subunit 5 (188 aa).

Ser-10 is subject to Phosphoserine.

It belongs to the TRAPP small subunits family. BET3 subfamily. Component of the multisubunit TRAPP (transport protein particle) complex, which includes at least TRAPPC2, TRAPPC2L, TRAPPC3, TRAPPC3L, TRAPPC4, TRAPPC5, TRAPPC8, TRAPPC9, TRAPPC10, TRAPPC11 and TRAPPC12.

The protein resides in the golgi apparatus. It localises to the cis-Golgi network. The protein localises to the endoplasmic reticulum. Its function is as follows. May play a role in vesicular transport from endoplasmic reticulum to Golgi. This Bos taurus (Bovine) protein is Trafficking protein particle complex subunit 5 (TRAPPC5).